The following is a 146-amino-acid chain: Large ribosomal subunit protein bL19 (146 aa).

This sequence belongs to the bacterial ribosomal protein bL19 family.

Functionally, this protein is located at the 30S-50S ribosomal subunit interface and may play a role in the structure and function of the aminoacyl-tRNA binding site. The sequence is that of Large ribosomal subunit protein bL19 from Bartonella bacilliformis (strain ATCC 35685 / KC583 / Herrer 020/F12,63).